A 770-amino-acid polypeptide reads, in one-letter code: 1,4-alpha-glucan branching enzyme GlgB (770 aa).

The active-site Nucleophile is the Asp437. Catalysis depends on Glu488, which acts as the Proton donor.

Belongs to the glycosyl hydrolase 13 family. GlgB subfamily. As to quaternary structure, monomer.

The catalysed reaction is Transfers a segment of a (1-&gt;4)-alpha-D-glucan chain to a primary hydroxy group in a similar glucan chain.. It participates in glycan biosynthesis; glycogen biosynthesis. Its function is as follows. Catalyzes the formation of the alpha-1,6-glucosidic linkages in glycogen by scission of a 1,4-alpha-linked oligosaccharide from growing alpha-1,4-glucan chains and the subsequent attachment of the oligosaccharide to the alpha-1,6 position. The chain is 1,4-alpha-glucan branching enzyme GlgB from Synechococcus sp. (strain JA-3-3Ab) (Cyanobacteria bacterium Yellowstone A-Prime).